A 1574-amino-acid polypeptide reads, in one-letter code: DNA-directed RNA polymerase subunit beta' (1574 aa).

The Zn(2+) site is built by Cys64, Cys66, Cys79, and Cys82. 3 residues coordinate Mg(2+): Asp590, Asp592, and Asp594. The Zn(2+) site is built by Cys928, Cys1002, Cys1009, and Cys1012.

Belongs to the RNA polymerase beta' chain family. As to quaternary structure, the RNAP catalytic core consists of 2 alpha, 1 beta, 1 beta' and 1 omega subunit. When a sigma factor is associated with the core the holoenzyme is formed, which can initiate transcription. Requires Mg(2+) as cofactor. Zn(2+) serves as cofactor.

The catalysed reaction is RNA(n) + a ribonucleoside 5'-triphosphate = RNA(n+1) + diphosphate. Functionally, DNA-dependent RNA polymerase catalyzes the transcription of DNA into RNA using the four ribonucleoside triphosphates as substrates. The protein is DNA-directed RNA polymerase subunit beta' of Aquifex aeolicus (strain VF5).